Here is an 809-residue protein sequence, read N- to C-terminus: Leucine--tRNA ligase (809 aa).

The 'HIGH' region signature appears at 40–51 (PYPSGQGLHVGH). The 'KMSKS' region signature appears at 581 to 585 (KMSKS). Lys-584 serves as a coordination point for ATP.

Belongs to the class-I aminoacyl-tRNA synthetase family.

The protein resides in the cytoplasm. It carries out the reaction tRNA(Leu) + L-leucine + ATP = L-leucyl-tRNA(Leu) + AMP + diphosphate. This is Leucine--tRNA ligase from Levilactobacillus brevis (strain ATCC 367 / BCRC 12310 / CIP 105137 / JCM 1170 / LMG 11437 / NCIMB 947 / NCTC 947) (Lactobacillus brevis).